The chain runs to 234 residues: Peptidase E (234 aa).

Active-site charge relay system residues include Ser-120, Asp-135, and His-157.

The protein belongs to the peptidase S51 family.

It is found in the cytoplasm. The catalysed reaction is Dipeptidase E catalyzes the hydrolysis of dipeptides Asp-|-Xaa. It does not act on peptides with N-terminal Glu, Asn or Gln, nor does it cleave isoaspartyl peptides.. Functionally, hydrolyzes dipeptides containing N-terminal aspartate residues. May play a role in allowing the cell to use peptide aspartate to spare carbon otherwise required for the synthesis of the aspartate family of amino acids. In Salmonella gallinarum (strain 287/91 / NCTC 13346), this protein is Peptidase E.